The primary structure comprises 432 residues: Serine--tRNA ligase (432 aa).

An L-serine-binding site is contributed by 230-232 (TAE). Residue 261-263 (RSE) participates in ATP binding. Glu-284 is a binding site for L-serine. 348–351 (EVSS) lines the ATP pocket. Ser-383 lines the L-serine pocket.

Belongs to the class-II aminoacyl-tRNA synthetase family. Type-1 seryl-tRNA synthetase subfamily. In terms of assembly, homodimer. The tRNA molecule binds across the dimer.

It localises to the cytoplasm. The catalysed reaction is tRNA(Ser) + L-serine + ATP = L-seryl-tRNA(Ser) + AMP + diphosphate + H(+). It catalyses the reaction tRNA(Sec) + L-serine + ATP = L-seryl-tRNA(Sec) + AMP + diphosphate + H(+). It functions in the pathway aminoacyl-tRNA biosynthesis; selenocysteinyl-tRNA(Sec) biosynthesis; L-seryl-tRNA(Sec) from L-serine and tRNA(Sec): step 1/1. Catalyzes the attachment of serine to tRNA(Ser). Is also able to aminoacylate tRNA(Sec) with serine, to form the misacylated tRNA L-seryl-tRNA(Sec), which will be further converted into selenocysteinyl-tRNA(Sec). The protein is Serine--tRNA ligase of Limosilactobacillus fermentum (strain NBRC 3956 / LMG 18251) (Lactobacillus fermentum).